The sequence spans 305 residues: Protoheme IX farnesyltransferase 2 (305 aa).

8 helical membrane-spanning segments follow: residues 31-51, 53-73, 103-123, 125-145, 152-172, 179-199, 231-251, and 277-297; these read VVMLLLLTALVGMCLASETWI, WKILLAGLTGIGFLSSAAAVI, ALVFAGVLTVVGYLILELWVN, LTALLTLASLVGYAFIYTMYL, NIVIGGLAGAAPPLLGWTAVT, ALLLVLIIFIWTPPHFWALAI, VLLALISVLPYLIGMTGAIYL, and AMKTFKFSIIHLMVLFVVLLV.

It belongs to the UbiA prenyltransferase family. Protoheme IX farnesyltransferase subfamily.

Its subcellular location is the cell inner membrane. It carries out the reaction heme b + (2E,6E)-farnesyl diphosphate + H2O = Fe(II)-heme o + diphosphate. Its pathway is porphyrin-containing compound metabolism; heme O biosynthesis; heme O from protoheme: step 1/1. In terms of biological role, converts heme B (protoheme IX) to heme O by substitution of the vinyl group on carbon 2 of heme B porphyrin ring with a hydroxyethyl farnesyl side group. This Pseudoalteromonas atlantica (strain T6c / ATCC BAA-1087) protein is Protoheme IX farnesyltransferase 2.